The primary structure comprises 669 residues: UvrABC system protein C (669 aa).

Residues 16–95 (TNPGVYRFRD…IKEFKPRFNV (80 aa)) enclose the GIY-YIG domain. The region spanning 207–242 (KRFIGRLEKDMAAAVAELDYERAARVRDDIIALRKV) is the UVR domain.

This sequence belongs to the UvrC family. Interacts with UvrB in an incision complex.

It localises to the cytoplasm. The UvrABC repair system catalyzes the recognition and processing of DNA lesions. UvrC both incises the 5' and 3' sides of the lesion. The N-terminal half is responsible for the 3' incision and the C-terminal half is responsible for the 5' incision. This is UvrABC system protein C from Arthrobacter sp. (strain FB24).